A 446-amino-acid polypeptide reads, in one-letter code: Chromosomal replication initiator protein DnaA (446 aa).

A domain I, interacts with DnaA modulators region spans residues 1–92; it reads MENISDLWNS…SQAEEEIDLP (92 aa). Positions 87-107 are disordered; sequence EEIDLPPSKPNSAQDDSNHLP. The interval 93 to 109 is domain II; it reads PSKPNSAQDDSNHLPQS. The segment covering 96-107 has biased composition (polar residues); it reads PNSAQDDSNHLP. The segment at 110–326 is domain III, AAA+ region; that stretch reads MLNPKYTFDT…GALIRVVAYS (217 aa). Residues Gly154, Gly156, Lys157, and Thr158 each contribute to the ATP site. A domain IV, binds dsDNA region spans residues 327-446; the sequence is SLINKDINAD…QVEEINDILK (120 aa).

Belongs to the DnaA family. As to quaternary structure, oligomerizes as a right-handed, spiral filament on DNA at oriC.

It localises to the cytoplasm. In terms of biological role, plays an essential role in the initiation and regulation of chromosomal replication. ATP-DnaA binds to the origin of replication (oriC) to initiate formation of the DNA replication initiation complex once per cell cycle. Binds the DnaA box (a 9 base pair repeat at the origin) and separates the double-stranded (ds)DNA. Forms a right-handed helical filament on oriC DNA; dsDNA binds to the exterior of the filament while single-stranded (ss)DNA is stabiized in the filament's interior. The ATP-DnaA-oriC complex binds and stabilizes one strand of the AT-rich DNA unwinding element (DUE), permitting loading of DNA polymerase. After initiation quickly degrades to an ADP-DnaA complex that is not apt for DNA replication. Binds acidic phospholipids. In Bacillus cereus (strain ATCC 10987 / NRS 248), this protein is Chromosomal replication initiator protein DnaA.